We begin with the raw amino-acid sequence, 272 residues long: MKTLNHLNKMKASQQKISMVTAYDYPSAKQAQQAEIDMILVGDSLGMTVLGYDSTVQVTLNDMIHHGKAVKRGASDTFIVVDMPIGTVGLSDEEDLKNALKLYQNTNANAVKVEGAHLTSFIQKATKMGIPVVSHLGLTPQSVGVMGYKLQGDTKTAAMQLIKDAKAMETAGAVVLVLEAIPSDLAREISQQLTIPVIGIGAGKDTDGQVLVYHDMLNYGVDRHAKFVKQFADFSSGIDGLRQYNEEVKAGTFPSENHTYKKRIMDEVEQHD.

D43 and D82 together coordinate Mg(2+). 3-methyl-2-oxobutanoate-binding positions include 43 to 44 (DS), D82, and K112. Residue E114 coordinates Mg(2+). E179 acts as the Proton acceptor in catalysis.

This sequence belongs to the PanB family. Homodecamer; pentamer of dimers. Mg(2+) is required as a cofactor.

It is found in the cytoplasm. It carries out the reaction 3-methyl-2-oxobutanoate + (6R)-5,10-methylene-5,6,7,8-tetrahydrofolate + H2O = 2-dehydropantoate + (6S)-5,6,7,8-tetrahydrofolate. Its pathway is cofactor biosynthesis; (R)-pantothenate biosynthesis; (R)-pantoate from 3-methyl-2-oxobutanoate: step 1/2. Functionally, catalyzes the reversible reaction in which hydroxymethyl group from 5,10-methylenetetrahydrofolate is transferred onto alpha-ketoisovalerate to form ketopantoate. The chain is 3-methyl-2-oxobutanoate hydroxymethyltransferase from Staphylococcus epidermidis (strain ATCC 35984 / DSM 28319 / BCRC 17069 / CCUG 31568 / BM 3577 / RP62A).